We begin with the raw amino-acid sequence, 391 residues long: Putative glutamate--cysteine ligase 2-2 (391 aa).

This sequence belongs to the glutamate--cysteine ligase type 2 family. YbdK subfamily.

It catalyses the reaction L-cysteine + L-glutamate + ATP = gamma-L-glutamyl-L-cysteine + ADP + phosphate + H(+). In terms of biological role, ATP-dependent carboxylate-amine ligase which exhibits weak glutamate--cysteine ligase activity. This is Putative glutamate--cysteine ligase 2-2 from Saccharopolyspora erythraea (strain ATCC 11635 / DSM 40517 / JCM 4748 / NBRC 13426 / NCIMB 8594 / NRRL 2338).